Consider the following 205-residue polypeptide: Large ribosomal subunit protein uL13 (205 aa).

This sequence belongs to the universal ribosomal protein uL13 family.

The sequence is that of Large ribosomal subunit protein uL13 (RpL13A) from Drosophila melanogaster (Fruit fly).